Here is a 118-residue protein sequence, read N- to C-terminus: Large ribosomal subunit protein bL17 (118 aa).

The protein belongs to the bacterial ribosomal protein bL17 family. Part of the 50S ribosomal subunit. Contacts protein L32.

The polypeptide is Large ribosomal subunit protein bL17 (Campylobacter hominis (strain ATCC BAA-381 / DSM 21671 / CCUG 45161 / LMG 19568 / NCTC 13146 / CH001A)).